The primary structure comprises 367 residues: Small ribosomal subunit protein uS2 (367 aa).

The disordered stretch occupies residues 1–68; it reads MPKKAEAKTG…NSTPSTGSKF (68 aa). A compositionally biased stretch (basic and acidic residues) spans 21–40; that stretch reads AKKDVKAEVNETNKTAEKVS. The segment covering 53–66 has biased composition (low complexity); the sequence is TNESSSNSTPSTGS.

Belongs to the universal ribosomal protein uS2 family.

This chain is Small ribosomal subunit protein uS2, found in Malacoplasma penetrans (strain HF-2) (Mycoplasma penetrans).